Consider the following 311-residue polypeptide: 33 kDa chaperonin (311 aa).

2 disulfide bridges follow: Cys-240–Cys-242 and Cys-273–Cys-276.

Belongs to the HSP33 family. Post-translationally, under oxidizing conditions two disulfide bonds are formed involving the reactive cysteines. Under reducing conditions zinc is bound to the reactive cysteines and the protein is inactive.

The protein localises to the cytoplasm. In terms of biological role, redox regulated molecular chaperone. Protects both thermally unfolding and oxidatively damaged proteins from irreversible aggregation. Plays an important role in the bacterial defense system toward oxidative stress. The protein is 33 kDa chaperonin of Trichodesmium erythraeum (strain IMS101).